The sequence spans 456 residues: RuvB-like 1 (456 aa).

Lys2 participates in a covalent cross-link: Glycyl lysine isopeptide (Lys-Gly) (interchain with G-Cter in SUMO2). Residue 70–77 participates in ATP binding; it reads GPPGTGKT. Lys225 is covalently cross-linked (Glycyl lysine isopeptide (Lys-Gly) (interchain with G-Cter in SUMO1); alternate). A Glycyl lysine isopeptide (Lys-Gly) (interchain with G-Cter in SUMO2); alternate cross-link involves residue Lys225. Lys445 participates in a covalent cross-link: Glycyl lysine isopeptide (Lys-Gly) (interchain with G-Cter in SUMO2). The residue at position 453 (Lys453) is an N6-acetyllysine.

The protein belongs to the RuvB family. As to quaternary structure, forms homohexameric rings. Can form a dodecamer with RUVBL2 made of two stacked hexameric rings; however, even though RUVBL1 and RUVBL2 are present in equimolar ratio, the oligomeric status of each hexamer is not known. Oligomerization may regulate binding to nucleic acids and conversely, binding to nucleic acids may affect the dodecameric assembly. Interaction of the complex with DHX34 results in conformational changes of the N-terminus of the RUVBL2 subunits, resulting in loss of nucleotide binding ability and ATP hydrolysis of the complex. Interacts with the transcriptional activation domain of MYC. Component of the RNA polymerase II holoenzyme complex. May also act to bridge the LEF1/TCF1-CTNNB1 complex and TBP. Component of the NuA4 histone acetyltransferase complex which contains the catalytic subunit KAT5/TIP60 and the subunits EP400, TRRAP/PAF400, BRD8/SMAP, EPC1, DMAP1/DNMAP1, RUVBL1/TIP49, RUVBL2, ING3, actin, ACTL6A/BAF53A, MORF4L1/MRG15, MORF4L2/MRGX, MRGBP, YEATS4/GAS41, VPS72/YL1 and MEAF6. The NuA4 complex interacts with MYC and the adenovirus E1A protein. RUVBL1 interacts with EP400. Component of a NuA4-related complex which contains EP400, TRRAP/PAF400, SRCAP, BRD8/SMAP, EPC1, DMAP1/DNMAP1, RUVBL1/TIP49, RUVBL2, actin, ACTL6A/BAF53A, VPS72 and YEATS4/GAS41. Component of the BAF53 complex, at least composed of ACTL6A/BAF53A, RUVBL1/TIP49, SMARCA2/BRM, and TRRAP/PAF400. Component of some MLL1/MLL complex, at least composed of the core components KMT2A/MLL1, ASH2L, HCFC1/HCF1, WDR5 and RBBP5, as well as the facultative components BACC1, CHD8, E2F6, HSP70, INO80C, KANSL1, LAS1L, MAX, MCRS1, MGA, MYST1/MOF, PELP1, PHF20, PRP31, RING2, RUVB1/TIP49A, RUVB2/TIP49B, SENP3, TAF1, TAF4, TAF6, TAF7, TAF9 and TEX10. Associates with alpha and gamma tubulins, particularly during metaphase and early anaphase. Interacts with NPAT. Component of the chromatin-remodeling INO80 complex; specifically part of a complex module associated with the helicase ATP-binding and the helicase C-terminal domain of INO80. Interacts with IGHMBP2. Interacts with OFD1. Interacts with HINT1. Component of a complex with USP49 and PSMC5. Component of a SWR1-like complex. Component of the R2TP complex composed at least of RUVBL1, RUVBL2, RPAP3 and PIHD1. Component of the PAQosome complex which is responsible for the biogenesis of several protein complexes and which consists of R2TP complex members RUVBL1, RUVBL2, RPAP3 and PIH1D1, URI complex members PFDN2, PFDN6, PDRG1, UXT and URI1 as well as ASDURF, POLR2E and DNAAF10/WDR92. Interacts with PIH1D1. Interacts with ITFG1. Interacts with WAC; WAC positively regulates MTOR activity by promoting the assembly of the TTT complex composed of TELO2, TTI1 and TTI2 and the RUVBL complex composed of RUVBL1 and RUVBL2 into the TTT-RUVBL complex which leads to the dimerization of the mTORC1 complex and its subsequent activation. The RUVBL1/RUVBL2 complex interacts with ZNHIT1 (via HIT-type zinc finger), ZNHIT3 (via HIT-type zinc finger), ZNHIT6 (via HIT-type zinc finger) and DDX59/ZNHIT5 (via HIT-type zinc finger) in the presence of ADP. Interacts with NOPCHAP1; the interaction is direct and disrupted upon ATP binding. Interacts with SMG1. Interacts with NOP2, NOP56 and NUFIP1. In terms of assembly, (Microbial infection) Interacts with Mumps L polymerase; this interaction regulates the viral transcription. As to expression, ubiquitously expressed with high expression in heart, skeletal muscle and testis.

It is found in the nucleus matrix. It localises to the nucleus. Its subcellular location is the nucleoplasm. The protein resides in the cytoplasm. The protein localises to the membrane. It is found in the cytoskeleton. It localises to the microtubule organizing center. Its subcellular location is the centrosome. The protein resides in the dynein axonemal particle. The catalysed reaction is ATP + H2O = ADP + phosphate + H(+). Its function is as follows. Possesses single-stranded DNA-stimulated ATPase and ATP-dependent DNA helicase (3' to 5') activity; hexamerization is thought to be critical for ATP hydrolysis and adjacent subunits in the ring-like structure contribute to the ATPase activity. Component of the NuA4 histone acetyltransferase complex which is involved in transcriptional activation of select genes principally by acetylation of nucleosomal histones H4 and H2A. This modification may both alter nucleosome-DNA interactions and promote interaction of the modified histones with other proteins which positively regulate transcription. This complex may be required for the activation of transcriptional programs associated with oncogene and proto-oncogene mediated growth induction, tumor suppressor mediated growth arrest and replicative senescence, apoptosis, and DNA repair. The NuA4 complex ATPase and helicase activities seem to be, at least in part, contributed by the association of RUVBL1 and RUVBL2 with EP400. NuA4 may also play a direct role in DNA repair when recruited to sites of DNA damage. Component of a SWR1-like complex that specifically mediates the removal of histone H2A.Z/H2AZ1 from the nucleosome. Proposed core component of the chromatin remodeling INO80 complex which exhibits DNA- and nucleosome-activated ATPase activity and catalyzes ATP-dependent nucleosome sliding. Plays an essential role in oncogenic transformation by MYC and also modulates transcriptional activation by the LEF1/TCF1-CTNNB1 complex. Essential for cell proliferation. May be able to bind plasminogen at cell surface and enhance plasminogen activation. The sequence is that of RuvB-like 1 from Homo sapiens (Human).